The following is a 423-amino-acid chain: Tubulin beta-2 chain (423 aa).

Residues Glu-44, Ser-113, Gly-117, Thr-118, Gly-119, Asn-179, and Asn-201 each coordinate GTP. Residue Glu-44 participates in Mg(2+) binding. A disordered region spans residues 394–423 (VSEYQQYQDATAEEEGEYDEDEDDEGGDYA). The segment covering 404-423 (TAEEEGEYDEDEDDEGGDYA) has biased composition (acidic residues).

The protein belongs to the tubulin family. In terms of assembly, dimer of alpha and beta chains. A typical microtubule is a hollow water-filled tube with an outer diameter of 25 nm and an inner diameter of 15 nM. Alpha-beta heterodimers associate head-to-tail to form protofilaments running lengthwise along the microtubule wall with the beta-tubulin subunit facing the microtubule plus end conferring a structural polarity. Microtubules usually have 13 protofilaments but different protofilament numbers can be found in some organisms and specialized cells. Requires Mg(2+) as cofactor.

The protein resides in the cytoplasm. Its subcellular location is the cytoskeleton. Functionally, tubulin is the major constituent of microtubules, a cylinder consisting of laterally associated linear protofilaments composed of alpha- and beta-tubulin heterodimers. Microtubules grow by the addition of GTP-tubulin dimers to the microtubule end, where a stabilizing cap forms. Below the cap, tubulin dimers are in GDP-bound state, owing to GTPase activity of alpha-tubulin. The polypeptide is Tubulin beta-2 chain (TUBB2) (Oomycete-like sp. (strain MacKay2000)).